A 92-amino-acid polypeptide reads, in one-letter code: Small ribosomal subunit protein uS19 (92 aa).

The protein belongs to the universal ribosomal protein uS19 family.

Functionally, protein S19 forms a complex with S13 that binds strongly to the 16S ribosomal RNA. The chain is Small ribosomal subunit protein uS19 (rpsS) from Synechocystis sp. (strain ATCC 27184 / PCC 6803 / Kazusa).